We begin with the raw amino-acid sequence, 140 residues long: Acyl carrier protein 1, chloroplastic (140 aa).

A chloroplast-targeting transit peptide spans 1-56 (MASAAAGASICIKSASFSPLAPGRISSLRSVSLPVSRKSFPSLKSSKSSFALRVSC). The Carrier domain occupies 60 to 135 (PETVAKVCGI…DAADLIEKLM (76 aa)). Residue serine 95 is modified to O-(pantetheine 4'-phosphoryl)serine.

The protein belongs to the acyl carrier protein (ACP) family. Post-translationally, 4'-phosphopantetheine is transferred from CoA to a specific serine of apo-ACP by acpS. This modification is essential for activity because fatty acids are bound in thioester linkage to the sulfhydryl of the prosthetic group.

The protein localises to the plastid. It localises to the chloroplast. It functions in the pathway lipid metabolism; fatty acid biosynthesis. Functionally, carrier of the growing fatty acid chain in fatty acid biosynthesis. The polypeptide is Acyl carrier protein 1, chloroplastic (ACL1.1) (Cuphea lanceolata (Cigar flower)).